The sequence spans 352 residues: Ion-translocating oxidoreductase complex subunit D (352 aa).

4 helical membrane passes run 20–40, 42–62, 69–91, and 123–143; these read IMLL…WFFG, GTLF…AIVL, VASH…SIPP, and PAMI…TSWL. Position 187 is an FMN phosphoryl threonine (Thr-187). 5 consecutive transmembrane segments (helical) span residues 215–235, 242–262, 267–287, 301–321, and 322–342; these read LAGV…VFLL, WHIP…GWLF, LASP…FFIL, LIFG…GGYP, and DGVA…DYYT.

The protein belongs to the NqrB/RnfD family. In terms of assembly, the complex is composed of six subunits: RsxA, RsxB, RsxC, RsxD, RsxE and RsxG. The cofactor is FMN.

Its subcellular location is the cell inner membrane. Its function is as follows. Part of a membrane-bound complex that couples electron transfer with translocation of ions across the membrane. Required to maintain the reduced state of SoxR. The protein is Ion-translocating oxidoreductase complex subunit D of Salmonella agona (strain SL483).